Consider the following 438-residue polypeptide: Delta(14)-sterol reductase ERG24 (438 aa).

Residues 1-13 lie on the Lumenal side of the membrane; the sequence is MVSALNPRTTEFE. Residues 14 to 34 traverse the membrane as a helical segment; the sequence is FGGLIGALGISIGLPVFTIIL. Topologically, residues 35–71 are cytoplasmic; that stretch reads NQMIRPDYFIKGFFQNFDIVELWNGIKPLRYYLGNRE. Residues 72 to 90 form a helical membrane-spanning segment; the sequence is LWTVYCLWYGILAVLDVIL. Residues 91 to 109 are Lumenal-facing; that stretch reads PGRVMKGVQLRDGSKLSYK. Residues 110-127 form a helical membrane-spanning segment; that stretch reads INGIAMSTTLVLVLAIRW. Topologically, residues 128-147 are cytoplasmic; it reads KLTDGQLPELQYLYENHVSL. The helical transmembrane segment at 148–172 threads the bilayer; that stretch reads CIISILFSFFLATYCYVASFIPLIF. Over 173–242 the chain is Lumenal; the sequence is KKNGNGKREK…LHHHYLKTGK (70 aa). The helical transmembrane segment at 243 to 263 threads the bilayer; that stretch reads INDALVLVNFLQGFYIFDGVL. At 264–308 the chain is on the cytoplasmic side; the sequence is NEEGVLTMMDITTDGFGFMLAFGDLSLVPFTYSLQARYLSVSPVE. Residues 309–328 traverse the membrane as a helical segment; sequence LGWVKVVGILAIMFLGFHIF. Over 329 to 368 the chain is Lumenal; that stretch reads HSANKQKSEFRQGKLENLKSIQTKRGTKLLCDGWWAKSQH. NADP(+)-binding positions include K335, R339, L358, W363, 370-371, D410, 414-418, and Y425; these read NY and CRLKY. Residues 369-387 form a helical membrane-spanning segment; the sequence is INYFGDWLISLSWCLATWF. Over 388 to 438 the chain is Cytoplasmic; that stretch reads QTPLTYYYSLYFATLLLHRQQRDEHKCRLKYGENWEEYERKVPYKIIPYVY.

It belongs to the ERG4/ERG24 family.

It is found in the membrane. It carries out the reaction 4,4-dimethyl-5alpha-cholesta-8,24-dien-3beta-ol + NADP(+) = 4,4-dimethyl-5alpha-cholesta-8,14,24-trien-3beta-ol + NADPH + H(+). It functions in the pathway steroid biosynthesis; zymosterol biosynthesis; zymosterol from lanosterol: step 2/6. Inhibited by the morpholine antifungal drug fenpropimorph. Functionally, delta(14)-sterol reductase; part of the third module of ergosterol biosynthesis pathway that includes the late steps of the pathway. ERG24 reduces the C14=C15 double bond of 4,4-dimethyl-cholesta-8,14,24-trienol to produce 4,4-dimethyl-cholesta-8,24-dienol. The third module or late pathway involves the ergosterol synthesis itself through consecutive reactions that mainly occur in the endoplasmic reticulum (ER) membrane. Firstly, the squalene synthase ERG9 catalyzes the condensation of 2 farnesyl pyrophosphate moieties to form squalene, which is the precursor of all steroids. Squalene synthase is crucial for balancing the incorporation of farnesyl diphosphate (FPP) into sterol and nonsterol isoprene synthesis. Secondly, the squalene epoxidase ERG1 catalyzes the stereospecific oxidation of squalene to (S)-2,3-epoxysqualene, which is considered to be a rate-limiting enzyme in steroid biosynthesis. Then, the lanosterol synthase ERG7 catalyzes the cyclization of (S)-2,3 oxidosqualene to lanosterol, a reaction that forms the sterol core. In the next steps, lanosterol is transformed to zymosterol through a complex process involving various demethylation, reduction and desaturation reactions. The lanosterol 14-alpha-demethylase ERG11 (also known as CYP51) catalyzes C14-demethylation of lanosterol to produce 4,4'-dimethyl cholesta-8,14,24-triene-3-beta-ol, which is critical for ergosterol biosynthesis. The C-14 reductase ERG24 reduces the C14=C15 double bond of 4,4-dimethyl-cholesta-8,14,24-trienol to produce 4,4-dimethyl-cholesta-8,24-dienol. 4,4-dimethyl-cholesta-8,24-dienol is substrate of the C-4 demethylation complex ERG25-ERG26-ERG27 in which ERG25 catalyzes the three-step monooxygenation required for the demethylation of 4,4-dimethyl and 4alpha-methylsterols, ERG26 catalyzes the oxidative decarboxylation that results in a reduction of the 3-beta-hydroxy group at the C-3 carbon to an oxo group, and ERG27 is responsible for the reduction of the keto group on the C-3. ERG28 has a role as a scaffold to help anchor ERG25, ERG26 and ERG27 to the endoplasmic reticulum and ERG29 regulates the activity of the iron-containing C4-methylsterol oxidase ERG25. Then, the sterol 24-C-methyltransferase ERG6 catalyzes the methyl transfer from S-adenosyl-methionine to the C-24 of zymosterol to form fecosterol. The C-8 sterol isomerase ERG2 catalyzes the reaction which results in unsaturation at C-7 in the B ring of sterols and thus converts fecosterol to episterol. The sterol-C5-desaturase ERG3 then catalyzes the introduction of a C-5 double bond in the B ring to produce 5-dehydroepisterol. The C-22 sterol desaturase ERG5 further converts 5-dehydroepisterol into ergosta-5,7,22,24(28)-tetraen-3beta-ol by forming the C-22(23) double bond in the sterol side chain. Finally, ergosta-5,7,22,24(28)-tetraen-3beta-ol is substrate of the C-24(28) sterol reductase ERG4 to produce ergosterol. The sequence is that of Delta(14)-sterol reductase ERG24 from Saccharomyces cerevisiae (strain ATCC 204508 / S288c) (Baker's yeast).